The primary structure comprises 143 residues: Large ribosomal subunit protein uL15 (143 aa).

Over residues 1–13 the composition is skewed to basic residues; the sequence is MIRKKKKVKKIRG. Residues 1 to 39 form a disordered region; the sequence is MIRKKKKVKKIRGSRTCGGGSHKKRRGAGNKGGRGMAGG. Gly residues predominate over residues 29–38; sequence GNKGGRGMAG.

The protein belongs to the universal ribosomal protein uL15 family. In terms of assembly, part of the 50S ribosomal subunit.

Its function is as follows. Binds to the 23S rRNA. This Methanocaldococcus jannaschii (strain ATCC 43067 / DSM 2661 / JAL-1 / JCM 10045 / NBRC 100440) (Methanococcus jannaschii) protein is Large ribosomal subunit protein uL15.